The chain runs to 341 residues: Ribulose-5-phosphate reductase (341 aa).

Residues C38, H64, E65, and E144 each contribute to the Zn(2+) site.

Belongs to the zinc-containing alcohol dehydrogenase family. Requires Zn(2+) as cofactor.

The enzyme catalyses D-ribitol 5-phosphate + NADP(+) = D-ribulose 5-phosphate + NADPH + H(+). The protein operates within cell wall biogenesis; poly(ribitol phosphate) teichoic acid biosynthesis. Functionally, catalyzes the NADPH dependent reduction of D-ribulose 5-phosphate to D-ribitol 5-phosphate. The protein is Ribulose-5-phosphate reductase of Bacillus spizizenii (strain ATCC 23059 / NRRL B-14472 / W23) (Bacillus subtilis subsp. spizizenii).